The following is a 276-amino-acid chain: MHFHFSKMHGLGNDFMVVDCLTQNIFFSPDLIRRLADRHRGIGFDQLLVVEAPYDPETDFHYRIFNADGSEVEQCGNGARCFARFVRMKGLTNKTSISVSTKKGKMILKVEDDDQITVNMGEPVFEPNKIPFKATQAEKTYLLRVDDKTLFSGAVSMGNPHCVTVVDDVDAYDVDKYGQLVESHERFPERVNAGFMQIISPNEVKLRVYERGAGETQACGSGACGAVAVGIMQELLGEEVKVSLPGGDLHIVWQGPGKPLFMTGPATHVYDGQLSI.

Residues asparagine 13, glutamine 46, and asparagine 66 each coordinate substrate. Cysteine 75 serves as the catalytic Proton donor. Substrate-binding positions include 76 to 77, asparagine 159, asparagine 192, and 210 to 211; these read GN and ER. Catalysis depends on cysteine 219, which acts as the Proton acceptor. 220–221 contacts substrate; sequence GS.

It belongs to the diaminopimelate epimerase family. In terms of assembly, homodimer.

Its subcellular location is the cytoplasm. It catalyses the reaction (2S,6S)-2,6-diaminopimelate = meso-2,6-diaminopimelate. Its pathway is amino-acid biosynthesis; L-lysine biosynthesis via DAP pathway; DL-2,6-diaminopimelate from LL-2,6-diaminopimelate: step 1/1. Catalyzes the stereoinversion of LL-2,6-diaminopimelate (L,L-DAP) to meso-diaminopimelate (meso-DAP), a precursor of L-lysine and an essential component of the bacterial peptidoglycan. The polypeptide is Diaminopimelate epimerase (Aliivibrio fischeri (strain ATCC 700601 / ES114) (Vibrio fischeri)).